Here is a 115-residue protein sequence, read N- to C-terminus: NAD(P)H-quinone oxidoreductase subunit M (115 aa).

This sequence belongs to the complex I NdhM subunit family. NDH-1 can be composed of about 15 different subunits; different subcomplexes with different compositions have been identified which probably have different functions.

It localises to the cellular thylakoid membrane. It carries out the reaction a plastoquinone + NADH + (n+1) H(+)(in) = a plastoquinol + NAD(+) + n H(+)(out). The catalysed reaction is a plastoquinone + NADPH + (n+1) H(+)(in) = a plastoquinol + NADP(+) + n H(+)(out). NDH-1 shuttles electrons from an unknown electron donor, via FMN and iron-sulfur (Fe-S) centers, to quinones in the respiratory and/or the photosynthetic chain. The immediate electron acceptor for the enzyme in this species is believed to be plastoquinone. Couples the redox reaction to proton translocation, and thus conserves the redox energy in a proton gradient. Cyanobacterial NDH-1 also plays a role in inorganic carbon-concentration. This chain is NAD(P)H-quinone oxidoreductase subunit M, found in Prochlorococcus marinus (strain MIT 9303).